Reading from the N-terminus, the 158-residue chain is F(420)H(2) dehydrogenase subunit C (158 aa).

This sequence belongs to the complex I 30 kDa subunit family. In terms of assembly, the FPO complex is composed of at least 13 different subunits.

The protein localises to the cell membrane. It carries out the reaction methanophenazine + reduced coenzyme F420-(gamma-L-Glu)(n) = dihydromethanophenazine + oxidized coenzyme F420-(gamma-L-Glu)(n) + H(+). Its function is as follows. Component of the F(420)H(2) dehydrogenase (FPO complex) which is part of the energy-conserving F(420)H(2):heterodisulfide oxidoreductase system. The membrane-bound electron transfer system of the complex plays an important role in the metabolism of methylotrophic methanogens when the organisms grow on methanol or methylamines. Catalyzes the oxidation of methanophenazine to dihydromethanophenazine. It shuttles electrons from F(420)H(2), via FAD and iron-sulfur (Fe-S) centers, to methanophenazine (an electron carrier in the membrane). It couples the redox reaction to proton translocation (for every two electrons transferred, two hydrogen ions are translocated across the cytoplasmic membrane), and thus conserves the redox energy in a proton gradient. It also catalyzes the oxidation of F(420)H(2) with quinones such as 2,3-dimethyl-1,4-naphthoquinone, 2-methyl-1,4-naphthoquinone and tetramethyl-p-benzoquinone. The sequence is that of F(420)H(2) dehydrogenase subunit C (fpoC) from Methanosarcina mazei (strain ATCC BAA-159 / DSM 3647 / Goe1 / Go1 / JCM 11833 / OCM 88) (Methanosarcina frisia).